The primary structure comprises 78 residues: uncharacterized protein (78 aa).

This is an uncharacterized protein from Escherichia coli (strain K12).